The chain runs to 198 residues: MRAFVLRARSAPTDSQLFLASVGQEAHTEILAHTLMNTIFVAQSHRNDVVVYLVLESTHDFSRTICFDTRNICHIGGFHEQALLTKIAKALDISRGMTKEQTRVVDEGITVSTISFEKLVQDLAVDYQLFMMDKKGTSIREQEFVGNPCFLLTDHIPMPKKSFNTLKRLGAQKISLGPKMLFASQCVVLIHNELDINQ.

S-adenosyl-L-methionine-binding residues include Met132 and Cys186.

Belongs to the methyltransferase superfamily. TrmY family.

The protein localises to the cytoplasm. This is Putative pseudouridine methyltransferase from Shewanella baltica (strain OS223).